Here is a 700-residue protein sequence, read N- to C-terminus: Elongation factor G 2 (700 aa).

Positions 8 to 290 constitute a tr-type G domain; it reads ERYRNIGISA…AVLDFLPSPI (283 aa). Residues 17-24, 88-92, and 142-145 each bind GTP; these read AHIDAGKT, DTPGH, and NKMD.

This sequence belongs to the TRAFAC class translation factor GTPase superfamily. Classic translation factor GTPase family. EF-G/EF-2 subfamily.

The protein resides in the cytoplasm. Catalyzes the GTP-dependent ribosomal translocation step during translation elongation. During this step, the ribosome changes from the pre-translocational (PRE) to the post-translocational (POST) state as the newly formed A-site-bound peptidyl-tRNA and P-site-bound deacylated tRNA move to the P and E sites, respectively. Catalyzes the coordinated movement of the two tRNA molecules, the mRNA and conformational changes in the ribosome. This chain is Elongation factor G 2, found in Paraburkholderia xenovorans (strain LB400).